The following is a 554-amino-acid chain: Calcium/calmodulin-dependent protein kinase type II delta 2 chain (554 aa).

The Protein kinase domain maps to 13–271 (YQLFEELGKG…AAEAPKHPWI (259 aa)). ATP-binding positions include 19–27 (LGKGAFSVV) and lysine 42. Aspartate 135 functions as the Proton acceptor in the catalytic mechanism. At threonine 286 the chain carries Phosphothreonine. Phosphoserine is present on residues serine 314 and serine 318. 2 disordered regions span residues 324–375 (PDGV…TIED) and 392–413 (WQPS…SSVQ). The segment covering 330 to 340 (NNKTNLASSPK) has biased composition (polar residues). Residue threonine 372 is modified to Phosphothreonine.

Belongs to the protein kinase superfamily. CAMK Ser/Thr protein kinase family. CaMK subfamily. In terms of assembly, CAMK2 is composed of four different chains: alpha, beta, gamma, and delta. The different isoforms assemble into homo- or heteromultimeric holoenzymes composed of 8 to 12 subunits. In terms of tissue distribution, first detected at 18 hpf. At 24 hpf, expressed in discrete anterior locations and along either side of the midline. At 48 hpf, expression is predominantly in the forebrain, and then accumulates in the forebrain, hindbrain, and retinal epithelium at 72 hpf.

It catalyses the reaction L-seryl-[protein] + ATP = O-phospho-L-seryl-[protein] + ADP + H(+). The enzyme catalyses L-threonyl-[protein] + ATP = O-phospho-L-threonyl-[protein] + ADP + H(+). Its activity is regulated as follows. Autophosphorylation of CAMK2 plays an important role in the regulation of the kinase activity. In terms of biological role, caM-kinase II (CAMK2) is a prominent kinase in the central nervous system. The chain is Calcium/calmodulin-dependent protein kinase type II delta 2 chain (camk2d2) from Danio rerio (Zebrafish).